We begin with the raw amino-acid sequence, 343 residues long: HTH-type transcriptional regulator GntR (343 aa).

An HTH lacI-type domain is found at 16–70 (PTLNEVARRAGVSPITASRALRGVASVAEELAQKVRDAARELGYVANPAARALAS). Residues 18 to 37 (LNEVARRAGVSPITASRALR) constitute a DNA-binding region (H-T-H motif).

With respect to regulation, free GntR fails to recognize gluconate and 6-phosphogluconate, whereas the GntR/DNA complexes recognize both ligands. It is therefore likely that GntR DNA binding induces structural changes that permit GntR to recognize effectors. Its function is as follows. Involved in the regulation of glucose metabolism. Represses its own expression as well as that of the gluconate permease GntP. It employs an effector mediated de-repression mechanism: in the absence of ligand, GntR binds to the gntR and gntP promoters and represses their expression. The release of promoter bound GntR is induced by gluconate and 6-phosphogluconate that bind with similar apparent affinities to the GntR/DNA complex. The release of GntR leads to transcription of the genes. This is HTH-type transcriptional regulator GntR from Pseudomonas aeruginosa (strain ATCC 15692 / DSM 22644 / CIP 104116 / JCM 14847 / LMG 12228 / 1C / PRS 101 / PAO1).